The chain runs to 336 residues: D-alanine--D-alanine ligase (336 aa).

The ATP-grasp domain occupies 124-330; it reads KMWFSALGVP…FTEYLIDVIG (207 aa). 154–209 lines the ATP pocket; the sequence is AFDNWGSVFVKAASQGSSVGCYKVDVKANIANVLKDAFSYAPYVVVEQTIHARELE. Residues D284, E297, and N299 each contribute to the Mg(2+) site.

Belongs to the D-alanine--D-alanine ligase family. Requires Mg(2+) as cofactor. Mn(2+) serves as cofactor.

It localises to the cytoplasm. It catalyses the reaction 2 D-alanine + ATP = D-alanyl-D-alanine + ADP + phosphate + H(+). The protein operates within cell wall biogenesis; peptidoglycan biosynthesis. Functionally, cell wall formation. In Shewanella frigidimarina (strain NCIMB 400), this protein is D-alanine--D-alanine ligase.